We begin with the raw amino-acid sequence, 120 residues long: MFLLYEYDIFWAFLIISSLIPILAFLISGILAPISKGPEKLSSYESGIEPMGDAWLQFRIRYYMFALVFVVFDVETVFLYPWAMSFDVLGVSVFIEALIFVLILIVGLVYAWRKGALEWS.

The next 3 membrane-spanning stretches (helical) occupy residues Ile-9–Gly-29, Met-64–Met-84, and Val-88–Leu-108.

It belongs to the complex I subunit 3 family. In terms of assembly, NDH is composed of at least 16 different subunits, 5 of which are encoded in the nucleus.

The protein localises to the plastid. It is found in the chloroplast thylakoid membrane. The catalysed reaction is a plastoquinone + NADH + (n+1) H(+)(in) = a plastoquinol + NAD(+) + n H(+)(out). The enzyme catalyses a plastoquinone + NADPH + (n+1) H(+)(in) = a plastoquinol + NADP(+) + n H(+)(out). In terms of biological role, NDH shuttles electrons from NAD(P)H:plastoquinone, via FMN and iron-sulfur (Fe-S) centers, to quinones in the photosynthetic chain and possibly in a chloroplast respiratory chain. The immediate electron acceptor for the enzyme in this species is believed to be plastoquinone. Couples the redox reaction to proton translocation, and thus conserves the redox energy in a proton gradient. This Lupinus luteus (European yellow lupine) protein is NAD(P)H-quinone oxidoreductase subunit 3, chloroplastic.